The primary structure comprises 347 residues: NADH-ubiquinone oxidoreductase chain 2 (347 aa).

Transmembrane regions (helical) follow at residues 3–23 (PIIL…TMIS), 25–45 (HWLL…PILM), 59–79 (YFLT…INTA), 96–116 (LVTM…FWVP), 127–147 (GMLL…QIFP), 150–170 (NPNI…WGGL), 193–213 (ILMY…MLTI), 240–260 (ITLT…LTGF), 274–294 (SNIM…YFYM), and 323–343 (IFLL…SPAL).

It belongs to the complex I subunit 2 family. As to quaternary structure, core subunit of respiratory chain NADH dehydrogenase (Complex I) which is composed of 45 different subunits. Interacts with TMEM242.

It is found in the mitochondrion inner membrane. The catalysed reaction is a ubiquinone + NADH + 5 H(+)(in) = a ubiquinol + NAD(+) + 4 H(+)(out). Core subunit of the mitochondrial membrane respiratory chain NADH dehydrogenase (Complex I) which catalyzes electron transfer from NADH through the respiratory chain, using ubiquinone as an electron acceptor. Essential for the catalytic activity and assembly of complex I. This Lemur catta (Ring-tailed lemur) protein is NADH-ubiquinone oxidoreductase chain 2.